Here is a 229-residue protein sequence, read N- to C-terminus: UPF0441 protein YE3666 (229 aa).

2 disordered regions span residues 101–125 (PAQA…QQSG) and 190–229 (KPAV…SMGG). 2 stretches are compositionally biased toward low complexity: residues 109–120 (TSSSSSETTAAA) and 214–229 (RSAA…SMGG).

This sequence belongs to the UPF0441 family.

This chain is UPF0441 protein YE3666, found in Yersinia enterocolitica serotype O:8 / biotype 1B (strain NCTC 13174 / 8081).